The following is a 226-amino-acid chain: PKHD-type hydroxylase PFL_0865 (226 aa).

A Fe2OG dioxygenase domain is found at 78–178 (KVFPPLINCY…RYASFFWTQS (101 aa)). 3 residues coordinate Fe cation: His96, Asp98, and His159. Position 169 (Arg169) interacts with 2-oxoglutarate.

Fe(2+) is required as a cofactor. The cofactor is L-ascorbate.

This chain is PKHD-type hydroxylase PFL_0865, found in Pseudomonas fluorescens (strain ATCC BAA-477 / NRRL B-23932 / Pf-5).